A 144-amino-acid polypeptide reads, in one-letter code: MNEELQNQFMALDVYNQQVDKLKEELSNIDMMIMELLRSIESMEGLKSSKEILLPLGAGAFIKAEAQNPEKIVLSVGVDVLLEKNVDDVIVDFQKSVEELEKTKELVNNQIQKTNQEIVKLRSELEKRAAAIEQRSAQMKPKTN.

The protein belongs to the prefoldin subunit alpha family. As to quaternary structure, heterohexamer of two alpha and four beta subunits.

The protein resides in the cytoplasm. Its function is as follows. Molecular chaperone capable of stabilizing a range of proteins. Seems to fulfill an ATP-independent, HSP70-like function in archaeal de novo protein folding. In Methanococcus maripaludis (strain DSM 14266 / JCM 13030 / NBRC 101832 / S2 / LL), this protein is Prefoldin subunit alpha.